The primary structure comprises 651 residues: PTS system N-acetylglucosamine-specific EIICBA component (651 aa).

The 371-residue stretch at 1-371 (MNILGFFQRL…FNLKTPGRED (371 aa)) folds into the PTS EIIC type-1 domain. 12 consecutive transmembrane segments (helical) span residues 16–36 (LPIAVLPVAALLLRFGQPDLL), 40–60 (FIAQAGGAIFDNLALIFAIGV), 70–90 (GSAALAGAVGYFVMTKAMVTI), 92–112 (PEINMGVLAGIITGLVAGAVY), 132–152 (FVPIATGFFCLILAAIFGYVW), 165–185 (WIVSAGALGSGIFGFINRLLI), 192–212 (VLNTIAWFQIGEFTNAAGTVF), 232–252 (GFFPIMMFGLPGAALAMYLAA), 264–284 (LLSVAITAFLTGVTEPLEFLF), 285–305 (LFLAPLLYLLHAVLTGISLFI), 308–328 (ALGIHAGFSFSAGAIDYVLMY), and 339–359 (MLLVMGVVFFFVYFLLFSAVI). The region spanning 390–472 (TQLATSYIAA…KKVVTRGPVA (83 aa)) is the PTS EIIB type-1 domain. Cysteine 412 functions as the Phosphocysteine intermediate; for EIIB activity in the catalytic mechanism. A Phosphocysteine; by EIIA modification is found at cysteine 412. In terms of domain architecture, PTS EIIA type-1 spans 519 to 623 (DEAFASKAVG…SMISPVVCSN (105 aa)). Histidine 556 and histidine 571 together coordinate Zn(2+). Residue histidine 571 is the Tele-phosphohistidine intermediate; for EIIA activity of the active site. Phosphohistidine; by HPr is present on histidine 571.

It depends on Zn(2+) as a cofactor.

It localises to the cell inner membrane. It catalyses the reaction N(pros)-phospho-L-histidyl-[protein] + N-acetyl-D-glucosamine(out) = N-acetyl-D-glucosamine 6-phosphate(in) + L-histidyl-[protein]. The phosphoenolpyruvate-dependent sugar phosphotransferase system (sugar PTS), a major carbohydrate active transport system, catalyzes the phosphorylation of incoming sugar substrates concomitantly with their translocation across the cell membrane. This system is involved in N-acetylglucosamine transport. The sequence is that of PTS system N-acetylglucosamine-specific EIICBA component (nagE) from Klebsiella pneumoniae.